Here is an 82-residue protein sequence, read N- to C-terminus: uncharacterized protein (82 aa).

The next 3 helical transmembrane spans lie at 4 to 26, 31 to 48, and 52 to 74; these read LDIAFFILPLGIMLLSIVGTCIC, LMPMLSLVISLVLTFTIF, and FLGWAVVYSLVSLALSYITLIVV.

The protein localises to the cell membrane. This is an uncharacterized protein from Bacillus subtilis (strain 168).